Here is a 423-residue protein sequence, read N- to C-terminus: Probable WRKY transcription factor 58 (423 aa).

Disordered regions lie at residues 91 to 128 (SSAH…AVHG), 142 to 171 (RNHY…DGYN), and 215 to 284 (IYKG…GVST). Low complexity-rich tracts occupy residues 99–111 (QPRQ…PQRP) and 144–162 (HYNN…VVNV). A DNA-binding region (WRKY 1) is located at residues 161 to 225 (NVDKPADDGY…YKGQHDHERP (65 aa)). Positions 259–271 (DDDDDDDEDDEDL) are enriched in acidic residues. The WRKY 2 DNA-binding region spans 300–365 (SEVDLLDDGY…YEGKHNHDVP (66 aa)).

The protein resides in the nucleus. In terms of biological role, transcription factor. Interacts specifically with the W box (5'-(T)TGAC[CT]-3'), a frequently occurring elicitor-responsive cis-acting element. The chain is Probable WRKY transcription factor 58 (WRKY58) from Arabidopsis thaliana (Mouse-ear cress).